The chain runs to 353 residues: 3-dehydroquinate synthase (353 aa).

This sequence belongs to the archaeal-type DHQ synthase family.

The enzyme catalyses 2-amino-2,3,7-trideoxy-D-lyxo-hept-6-ulosonate + NAD(+) + H2O = 3-dehydroquinate + NH4(+) + NADH + H(+). Catalyzes the oxidative deamination and cyclization of 2-amino-3,7-dideoxy-D-threo-hept-6-ulosonic acid (ADH) to yield 3-dehydroquinate (DHQ), which is fed into the canonical shikimic pathway of aromatic amino acid biosynthesis. In Nitrosopumilus maritimus (strain SCM1), this protein is 3-dehydroquinate synthase.